The primary structure comprises 338 residues: Fructose-1,6-bisphosphatase 1 (338 aa).

N-acetylthreonine is present on Thr2. AMP contacts are provided by residues 18–22 (VMEEG) and 28–32 (TGEMT). Mg(2+)-binding residues include Asp69 and Glu98. 113-114 (KY) contacts AMP. Residues Asp119, Leu121, and Asp122 each coordinate Mg(2+). Position 122-125 (122-125 (DGSS)) interacts with substrate. Lys141 lines the AMP pocket. Lys151 carries the N6-succinyllysine modification. Ser208 carries the post-translational modification Phosphoserine. Substrate is bound by residues 213–216 (NEGY), 244–249 (RYVGSM), Tyr265, and 275–277 (KLR). Phosphotyrosine is present on residues Tyr216, Tyr245, and Tyr265. Residue Glu281 participates in Mg(2+) binding.

This sequence belongs to the FBPase class 1 family. Homotetramer. The cofactor is Mg(2+).

The catalysed reaction is beta-D-fructose 1,6-bisphosphate + H2O = beta-D-fructose 6-phosphate + phosphate. Its pathway is carbohydrate biosynthesis; gluconeogenesis. Its activity is regulated as follows. Subject to complex allosteric regulation. The enzyme can assume an active R-state, or an inactive T-state. Intermediate conformations may exist. AMP acts as an allosteric inhibitor. AMP binding affects the turnover of bound substrate and not the affinity for substrate. Fructose 2,6-bisphosphate acts as a competitive inhibitor. Fructose 2,6-bisphosphate and AMP have synergistic effects. Catalyzes the hydrolysis of fructose 1,6-bisphosphate to fructose 6-phosphate in the presence of divalent cations, acting as a rate-limiting enzyme in gluconeogenesis. Plays a role in regulating glucose sensing and insulin secretion of pancreatic beta-cells. Appears to modulate glycerol gluconeogenesis in liver. Important regulator of appetite and adiposity; increased expression of the protein in liver after nutrient excess increases circulating satiety hormones and reduces appetite-stimulating neuropeptides and thus seems to provide a feedback mechanism to limit weight gain. This Bos taurus (Bovine) protein is Fructose-1,6-bisphosphatase 1 (FBP1).